We begin with the raw amino-acid sequence, 290 residues long: Bifunctional protein FolD (290 aa).

NADP(+)-binding positions include 167 to 169, S192, and I233; that span reads GRS.

It belongs to the tetrahydrofolate dehydrogenase/cyclohydrolase family. In terms of assembly, homodimer.

It carries out the reaction (6R)-5,10-methylene-5,6,7,8-tetrahydrofolate + NADP(+) = (6R)-5,10-methenyltetrahydrofolate + NADPH. It catalyses the reaction (6R)-5,10-methenyltetrahydrofolate + H2O = (6R)-10-formyltetrahydrofolate + H(+). The protein operates within one-carbon metabolism; tetrahydrofolate interconversion. In terms of biological role, catalyzes the oxidation of 5,10-methylenetetrahydrofolate to 5,10-methenyltetrahydrofolate and then the hydrolysis of 5,10-methenyltetrahydrofolate to 10-formyltetrahydrofolate. The polypeptide is Bifunctional protein FolD (Gloeobacter violaceus (strain ATCC 29082 / PCC 7421)).